The sequence spans 94 residues: Citrate lyase acyl carrier protein (94 aa).

Ser-14 carries the O-(phosphoribosyl dephospho-coenzyme A)serine modification.

Belongs to the CitD family. As to quaternary structure, oligomer with a subunit composition of (alpha,beta,gamma)6.

The protein localises to the cytoplasm. In terms of biological role, covalent carrier of the coenzyme of citrate lyase. This Halothermothrix orenii (strain H 168 / OCM 544 / DSM 9562) protein is Citrate lyase acyl carrier protein.